A 307-amino-acid chain; its full sequence is Ornithine carbamoyltransferase (307 aa).

Residues Ser-55 to Thr-58, Gln-82, Arg-106, and His-133 to Gln-136 each bind carbamoyl phosphate. L-ornithine contacts are provided by residues Asn-164, Asp-224, and Ser-228–Met-229. Residues Cys-263–Leu-264 and Arg-291 contribute to the carbamoyl phosphate site.

Belongs to the aspartate/ornithine carbamoyltransferase superfamily. OTCase family.

The protein localises to the cytoplasm. It catalyses the reaction carbamoyl phosphate + L-ornithine = L-citrulline + phosphate + H(+). It participates in amino-acid biosynthesis; L-arginine biosynthesis; L-arginine from L-ornithine and carbamoyl phosphate: step 1/3. Reversibly catalyzes the transfer of the carbamoyl group from carbamoyl phosphate (CP) to the N(epsilon) atom of ornithine (ORN) to produce L-citrulline. The polypeptide is Ornithine carbamoyltransferase (Bradyrhizobium diazoefficiens (strain JCM 10833 / BCRC 13528 / IAM 13628 / NBRC 14792 / USDA 110)).